We begin with the raw amino-acid sequence, 96 residues long: MLFHVKMTVKLPVDMDPQQAERLKAEEKEMAQRLQREGSWRHLWRIAGHYANYSLFDLPSVEALHDTLTRLPLFPYMDIEIDGLCRHPSSIHADDR.

It belongs to the muconolactone Delta-isomerase family. In terms of assembly, homodecamer.

It catalyses the reaction (S)-muconolactone = (4,5-dihydro-5-oxofuran-2-yl)-acetate. It participates in aromatic compound metabolism; beta-ketoadipate pathway; 5-oxo-4,5-dihydro-2-furylacetate from catechol: step 3/3. This is Muconolactone Delta-isomerase (catC) from Pseudomonas aeruginosa (strain ATCC 15692 / DSM 22644 / CIP 104116 / JCM 14847 / LMG 12228 / 1C / PRS 101 / PAO1).